The following is a 286-amino-acid chain: Shikimate dehydrogenase (NADP(+)) (286 aa).

Shikimate-binding positions include 19-21 (SLS) and T66. The active-site Proton acceptor is the K70. Shikimate-binding residues include N91 and D107. NADP(+)-binding positions include 129-133 (GSGGA) and L229. Y231 serves as a coordination point for shikimate. G252 contacts NADP(+).

The protein belongs to the shikimate dehydrogenase family. In terms of assembly, homodimer.

The enzyme catalyses shikimate + NADP(+) = 3-dehydroshikimate + NADPH + H(+). Its pathway is metabolic intermediate biosynthesis; chorismate biosynthesis; chorismate from D-erythrose 4-phosphate and phosphoenolpyruvate: step 4/7. In terms of biological role, involved in the biosynthesis of the chorismate, which leads to the biosynthesis of aromatic amino acids. Catalyzes the reversible NADPH linked reduction of 3-dehydroshikimate (DHSA) to yield shikimate (SA). This Prochlorococcus marinus (strain AS9601) protein is Shikimate dehydrogenase (NADP(+)).